A 166-amino-acid chain; its full sequence is Ribosome maturation factor RimM (166 aa).

The region spanning 90 to 163 is the PRC barrel domain; that stretch reads EGEFLVSQII…TVTIELLEGL (74 aa).

This sequence belongs to the RimM family. Binds ribosomal protein uS19.

The protein resides in the cytoplasm. Its function is as follows. An accessory protein needed during the final step in the assembly of 30S ribosomal subunit, possibly for assembly of the head region. Essential for efficient processing of 16S rRNA. May be needed both before and after RbfA during the maturation of 16S rRNA. It has affinity for free ribosomal 30S subunits but not for 70S ribosomes. The polypeptide is Ribosome maturation factor RimM (Oenococcus oeni (strain ATCC BAA-331 / PSU-1)).